Consider the following 239-residue polypeptide: IkB-like protein (239 aa).

4 ANK repeats span residues 48 to 80, 87 to 118, 124 to 153, and 158 to 187; these read SKIT…EIIS, DGNS…GIKV, NGIT…NPNQ, and KGFN…KPLF. Positions 81–87 match the Nuclear localization signal motif; sequence HYRRDKD. Positions 203 to 214 match the Nuclear localization signal motif; sequence KKKPKIIITSCE. A PxIxITxC motif; Interaction with host PPP3CA motif is present at residues 206–213; it reads PKIIITSC. The short motif at 228-231 is the FLCV motif element; it reads FLCV.

It belongs to the asfivirus A238L family. As to quaternary structure, interacts with host PPIA. Interacts with host PPP3CA/Calcineurin. Interacts with host RELA/p65; interaction of the 32 kDa form with host RELA results in the formation of a stable complex with NF-kappa-B. Interacts with host PPP3R1. Interacts with host EP300; this interaction inhibits the association of host EP300 with host RELA, JUN and NFATC2. In terms of processing, the protein exists in a 28 kDa and a 32 kDa form, probably due to post-translational modifications which are neither phosphorylation, nor sumoylation.

It is found in the host nucleus. The protein resides in the host cytoplasm. In terms of biological role, ikB-like protein that inhibits the binding of NF-kappa-B to DNA, thereby downregulating pro-inflammatory cytokine production. Forms a heterodimer with the NF-kappa-B subunit RELA/p65 and prevents the activation of the NF-kappa-B transcription factor. Inhibits calcineurin function, which is required for the induction of nuclear factor of activated T cells (NFAT)-dependent immune response genes. Prevents the binding of substrates to calcineurin without affecting the phosphatase activity. Does not contain the serine residues that are phosphorylated by host IkB kinase and thus is not degraded following stimulation of the NFkB pathway. The polypeptide is IkB-like protein (A238L) (Ornithodoros (relapsing fever ticks)).